Consider the following 830-residue polypeptide: Phenylalanine--tRNA ligase beta subunit (830 aa).

The tRNA-binding domain occupies 39 to 158 (GQSLDGVVVG…DDTPVGTPFP (120 aa)). The B5 domain maps to 417-492 (PAEKTIALRP…RLHGYDQIPE (76 aa)). Positions 470, 476, 479, and 480 each coordinate Mg(2+). Positions 490–510 (IPEPERVPVPSRTPEQPPEET) are disordered. The 93-residue stretch at 736 to 828 (SRFPVVDRDL…LAENHGARLR (93 aa)) folds into the FDX-ACB domain.

Belongs to the phenylalanyl-tRNA synthetase beta subunit family. Type 1 subfamily. As to quaternary structure, tetramer of two alpha and two beta subunits. It depends on Mg(2+) as a cofactor.

It localises to the cytoplasm. The catalysed reaction is tRNA(Phe) + L-phenylalanine + ATP = L-phenylalanyl-tRNA(Phe) + AMP + diphosphate + H(+). The sequence is that of Phenylalanine--tRNA ligase beta subunit from Salinibacter ruber (strain DSM 13855 / M31).